The chain runs to 146 residues: Ribonuclease H (146 aa).

In terms of domain architecture, RNase H type-1 spans 1–142; that stretch reads MNKIIIYTDG…ADALANLAMD (142 aa). Mg(2+) contacts are provided by Asp9, Glu47, Asp70, and Asp134.

Belongs to the RNase H family. As to quaternary structure, monomer. It depends on Mg(2+) as a cofactor.

The protein resides in the cytoplasm. The enzyme catalyses Endonucleolytic cleavage to 5'-phosphomonoester.. Functionally, endonuclease that specifically degrades the RNA of RNA-DNA hybrids. In Ruthia magnifica subsp. Calyptogena magnifica, this protein is Ribonuclease H.